We begin with the raw amino-acid sequence, 1254 residues long: Histone-lysine N-methyltransferase eggless (1254 aa).

Disordered stretches follow at residues 24–209 (ALVE…EIPR) and 228–248 (PVPRSKAMQESKETQKTSKTT). 2 stretches are compositionally biased toward basic and acidic residues: residues 40–57 (TPEKKAKMEIDAEMKDLT) and 65–81 (KSQEKDPDALEDAKDPE). Over residues 112–125 (SVELLESPLKSPSS) the composition is skewed to low complexity. A compositionally biased stretch (basic and acidic residues) spans 136-162 (LEEKEKPGPAKELEPKESEPDSKESSK). Residues 172-181 (ELISSPTSDD) are compositionally biased toward polar residues. 2 stretches are compositionally biased toward basic and acidic residues: residues 182 to 197 (SLAKEKEVEVKEEHGQ) and 234 to 243 (AMQESKETQK). Residues 391–416 (TILQAKIERLAKKFEEVDLQLAQVQG) adopt a coiled-coil conformation. 2 Tudor domains span residues 535 to 607 (RLPI…SEKV) and 634 to 691 (QCTK…KETQ). Positions 734-760 (ARKSTSKSGSPASTAAPPTGSSSSSAV) are disordered. A compositionally biased stretch (low complexity) spans 739-759 (SKSGSPASTAAPPTGSSSSSA). The MBD domain maps to 811-877 (LDSYSPLSKP…DNFDFTPDLR (67 aa)). Positions 939-1011 (VCCDCEDDCS…NCLNRVVQHS (73 aa)) constitute a Pre-SET domain. Positions 941, 943, 947, 953, 955, 993, 997, 999, and 1003 each coordinate Zn(2+). Positions 1014-1229 (MKLQVFKTSN…SGTELTWNYN (216 aa)) constitute an SET domain. S-adenosyl-L-methionine contacts are provided by residues 1024–1026 (RGW), aspartate 1062, and tyrosine 1064. A compositionally biased stretch (basic and acidic residues) spans 1081 to 1090 (YESDVERADL). Residues 1081–1139 (YESDVERADLDHEDDNYGPDAEDDDDFRPNNYYQKKKEKLRSSRSNSSSTQNTELDSQE) form a disordered region. The span at 1091 to 1106 (DHEDDNYGPDAEDDDD) shows a compositional bias: acidic residues. The span at 1123-1134 (SRSNSSSTQNTE) shows a compositional bias: low complexity. S-adenosyl-L-methionine contacts are provided by residues arginine 1183 and 1186–1187 (NH). The Zn(2+) site is built by cysteine 1189, cysteine 1242, cysteine 1244, and cysteine 1249. The region spanning 1238 to 1254 (KVLYCQCGAQNCRVRLL) is the Post-SET domain.

It belongs to the class V-like SAM-binding methyltransferase superfamily. Histone-lysine methyltransferase family. Suvar3-9 subfamily.

It localises to the nucleus. The protein resides in the chromosome. It catalyses the reaction L-lysyl(9)-[histone H3] + 3 S-adenosyl-L-methionine = N(6),N(6),N(6)-trimethyl-L-lysyl(9)-[histone H3] + 3 S-adenosyl-L-homocysteine + 3 H(+). Its function is as follows. Histone methyltransferase that specifically trimethylates 'Lys-9' of histone H3 in ovary. H3 'Lys-9' trimethylation represents a specific tag for epigenetic transcriptional repression by recruiting Su(var)205/HP1 to methylated histones. Plays a central role during oogenesis. The chain is Histone-lysine N-methyltransferase eggless (egg) from Drosophila pseudoobscura pseudoobscura (Fruit fly).